The sequence spans 397 residues: Acetate kinase (397 aa).

Asn-8 contributes to the Mg(2+) binding site. Residue Lys-15 coordinates ATP. Residue Arg-89 participates in substrate binding. Catalysis depends on Asp-146, which acts as the Proton donor/acceptor. Residues 206-210, 283-285, and 331-335 contribute to the ATP site; these read HVGNG, DMR, and GIGEN. Glu-383 contacts Mg(2+).

This sequence belongs to the acetokinase family. Homodimer. The cofactor is Mg(2+). Requires Mn(2+) as cofactor.

Its subcellular location is the cytoplasm. It carries out the reaction acetate + ATP = acetyl phosphate + ADP. It functions in the pathway metabolic intermediate biosynthesis; acetyl-CoA biosynthesis; acetyl-CoA from acetate: step 1/2. Functionally, catalyzes the formation of acetyl phosphate from acetate and ATP. Can also catalyze the reverse reaction. This chain is Acetate kinase, found in Streptococcus thermophilus (strain ATCC BAA-491 / LMD-9).